Here is a 103-residue protein sequence, read N- to C-terminus: 11.2 kDa protein (103 aa).

This is 11.2 kDa protein from Pseudomonas phage Pf1 (Bacteriophage Pf1).